We begin with the raw amino-acid sequence, 424 residues long: ATP-sensitive inward rectifier potassium channel 8 (424 aa).

The Cytoplasmic portion of the chain corresponds to 1 to 69 (MLARKSIIPE…IFTTLVDLKW (69 aa)). Phosphoserine is present on serine 6. The chain crosses the membrane as a helical span at residues 70–94 (RHTLVIFTMSFLCSWLLFAIMWWLV). Topologically, residues 95–126 (AFAHGDIYAYMEKSGMEKSGLESTVCVTNVRS) are extracellular. An intramembrane region (helical; Pore-forming) is located at residues 127–138 (FTSAFLFSIEVQ). Positions 139-145 (VTIGFGG) form an intramembrane region, pore-forming. The short motif at 140 to 145 (TIGFGG) is the Selectivity filter element. The Extracellular portion of the chain corresponds to 146-154 (RMMTEECPL). The helical transmembrane segment at 155–176 (AITVLILQNIVGLIINAVMLGC) threads the bilayer. The Cytoplasmic segment spans residues 177–424 (IFMKTAQAHR…PEGNQNTSES (248 aa)). The tract at residues 375 to 424 (SHQNSLRKRNSMRRNNSMRRNNSIRRNNSSLMVPKVQFMTPEGNQNTSES) is disordered. The span at 387–404 (RRNNSMRRNNSIRRNNSS) shows a compositional bias: low complexity.

It belongs to the inward rectifier-type potassium channel (TC 1.A.2.1) family. KCNJ8 subfamily. In terms of assembly, interacts with ABCC9. As to expression, predominantly detected in fetal and adult heart.

It is found in the membrane. The enzyme catalyses K(+)(in) = K(+)(out). Its function is as follows. Inward rectifier potassium channels are characterized by a greater tendency to allow potassium to flow into the cell rather than out of it. Their voltage dependence is regulated by the concentration of extracellular potassium; as external potassium is raised, the voltage range of the channel opening shifts to more positive voltages. The inward rectification is mainly due to the blockage of outward current by internal magnesium. This channel is activated by internal ATP and can be blocked by external barium. Can form a sulfonylurea-sensitive but ATP-insensitive potassium channel with ABCC9. The chain is ATP-sensitive inward rectifier potassium channel 8 (KCNJ8) from Homo sapiens (Human).